The chain runs to 435 residues: GTPase Der (435 aa).

EngA-type G domains lie at 4 to 167 (PTLA…PSED) and 175 to 350 (IKFS…ENQT). Residues 10-17 (GRPNVGKS), 57-61 (DTGGI), 119-122 (NKVD), 181-188 (GRPNVGKS), 228-232 (DTAGI), and 293-296 (NKWD) each bind GTP. The KH-like domain occupies 351-435 (RRIQSSVLND…PIHIIARKRK (85 aa)).

It belongs to the TRAFAC class TrmE-Era-EngA-EngB-Septin-like GTPase superfamily. EngA (Der) GTPase family. In terms of assembly, associates with the 50S ribosomal subunit.

In terms of biological role, GTPase that plays an essential role in the late steps of ribosome biogenesis. The polypeptide is GTPase Der (Lacticaseibacillus paracasei (strain ATCC 334 / BCRC 17002 / CCUG 31169 / CIP 107868 / KCTC 3260 / NRRL B-441) (Lactobacillus paracasei)).